Reading from the N-terminus, the 274-residue chain is Ribosomal RNA small subunit methyltransferase A (274 aa).

S-adenosyl-L-methionine is bound by residues His15, Leu17, Gly42, Glu64, Asp89, and Asn108.

It belongs to the class I-like SAM-binding methyltransferase superfamily. rRNA adenine N(6)-methyltransferase family. RsmA subfamily.

Its subcellular location is the cytoplasm. The catalysed reaction is adenosine(1518)/adenosine(1519) in 16S rRNA + 4 S-adenosyl-L-methionine = N(6)-dimethyladenosine(1518)/N(6)-dimethyladenosine(1519) in 16S rRNA + 4 S-adenosyl-L-homocysteine + 4 H(+). Specifically dimethylates two adjacent adenosines (A1518 and A1519) in the loop of a conserved hairpin near the 3'-end of 16S rRNA in the 30S particle. May play a critical role in biogenesis of 30S subunits. This Prochlorococcus marinus (strain MIT 9301) protein is Ribosomal RNA small subunit methyltransferase A.